The sequence spans 142 residues: Large ribosomal subunit protein uL11 (142 aa).

This sequence belongs to the universal ribosomal protein uL11 family. Part of the ribosomal stalk of the 50S ribosomal subunit. Interacts with L10 and the large rRNA to form the base of the stalk. L10 forms an elongated spine to which L12 dimers bind in a sequential fashion forming a multimeric L10(L12)X complex. In terms of processing, one or more lysine residues are methylated.

Forms part of the ribosomal stalk which helps the ribosome interact with GTP-bound translation factors. In Xanthomonas campestris pv. campestris (strain B100), this protein is Large ribosomal subunit protein uL11.